The following is a 223-amino-acid chain: Transmembrane protein 235 (223 aa).

An N-terminal signal peptide occupies residues 1–28; the sequence is MARLGALLLAAALGALLSFALLAAAVAS. N41 carries N-linked (GlcNAc...) asparagine glycosylation. A run of 3 helical transmembrane segments spans residues 96–116, 126–146, and 176–196; these read VIVVLPLSLVLLVCGWICGLL, LLFTGCYFLLGSVLTLAGVSI, and WSMALAWGSCALEAFSGTLLL.

This sequence belongs to the PMP-22/EMP/MP20 family. In terms of processing, N-glycosylated.

Its subcellular location is the membrane. It is found in the endoplasmic reticulum. This is Transmembrane protein 235 (TMEM235) from Homo sapiens (Human).